The following is a 100-amino-acid chain: Large ribosomal subunit protein bL27 (100 aa).

Residues M1 to F9 constitute a propeptide that is removed on maturation.

Belongs to the bacterial ribosomal protein bL27 family. In terms of processing, the N-terminus is cleaved by ribosomal processing cysteine protease Prp.

This is Large ribosomal subunit protein bL27 from Clostridium perfringens (strain ATCC 13124 / DSM 756 / JCM 1290 / NCIMB 6125 / NCTC 8237 / Type A).